The following is a 116-amino-acid chain: Hydrogenase maturation factor HypA (116 aa).

Ni(2+) is bound at residue H2. Residues C73, C76, C89, and C92 each coordinate Zn(2+).

Belongs to the HypA/HybF family.

Its function is as follows. Involved in the maturation of [NiFe] hydrogenases. Required for nickel insertion into the metal center of the hydrogenase. The sequence is that of Hydrogenase maturation factor HypA from Chlorobium limicola (strain DSM 245 / NBRC 103803 / 6330).